Here is an 87-residue protein sequence, read N- to C-terminus: Phosphoribosyl-ATP pyrophosphatase (87 aa).

It belongs to the PRA-PH family.

It localises to the cytoplasm. It catalyses the reaction 1-(5-phospho-beta-D-ribosyl)-ATP + H2O = 1-(5-phospho-beta-D-ribosyl)-5'-AMP + diphosphate + H(+). Its pathway is amino-acid biosynthesis; L-histidine biosynthesis; L-histidine from 5-phospho-alpha-D-ribose 1-diphosphate: step 2/9. The sequence is that of Phosphoribosyl-ATP pyrophosphatase from Bifidobacterium animalis subsp. lactis (strain AD011).